A 529-amino-acid polypeptide reads, in one-letter code: Transcription factor BIM1 (529 aa).

Disordered stretches follow at residues 1–91 (MELP…HVLP), 245–291 (KKES…RRSK), 425–450 (RVAS…EEVL), and 491–529 (AKQS…KTGQ). Residues 76 to 86 (KPPPPAPPPPL) show a composition bias toward pro residues. Composition is skewed to basic and acidic residues over residues 255–265 (HRVDLRVKADV) and 282–291 (SATEQRRRSK). Residues 276–326 (TPRSKHSATEQRRRSKINDRFQMLRQLIPNSDQKRDKASFLLEVIEYIQFL) form the bHLH domain. The segment covering 426 to 438 (VASSEAVEPSPSS) has biased composition (low complexity). The segment covering 499–517 (FKDHEVREPVSRTRNDNVK) has biased composition (basic and acidic residues). Basic residues predominate over residues 518–529 (QTRKPKRLKTGQ).

Homodimer. Interacts with BZR2/BES1 through both C-terminal and bHLH domains. Also interacts with LHW. Expressed constitutively in roots.

Its subcellular location is the nucleus. In terms of biological role, positive brassinosteroid-signaling protein. Transcription factor that bind specifically to the DNA sequence 5'-CANNTG-3'(E box). Can bind individually to the promoter as a homodimer or synergistically as a heterodimer with BZR2/BES1. Does not itself activate transcription but enhances BZR2/BES1-mediated target gene activation. This Arabidopsis thaliana (Mouse-ear cress) protein is Transcription factor BIM1 (BIM1).